Consider the following 280-residue polypeptide: uncharacterized protein (280 aa).

The protein to E.coli YgfZ (UP14) and B.aphidicola (subsp. Acyrthosiphon pisum) BU435.

This is an uncharacterized protein from Haemophilus influenzae (strain ATCC 51907 / DSM 11121 / KW20 / Rd).